Reading from the N-terminus, the 579-residue chain is Folliculin (579 aa).

The tract at residues 30–81 (PQGDGNEDSPGQGEQAEEEEGGIQMNSRMRAHSPAEGASVESSSPGPKKSDM) is disordered. 2 positions are modified to phosphoserine: Ser-62 and Ser-73. One can recognise a uDENN FLCN/SMCR8-type domain in the interval 86–242 (RSLAAGHPGY…RNGNAARSLT (157 aa)). Positions 210 to 220 (AEQFGCPQRAQ) are essential for interaction with LDHA. Residues 287–310 (EKLADLEEESESWDNSEAEEEEKA) are a coiled coil. Residues 294–308 (EESESWDNSEAEEEE) show a composition bias toward acidic residues. Positions 294–337 (EESESWDNSEAEEEEKAPVLPESTEGRELTQGPAESSSLSGCGS) are disordered. At Ser-302 the chain carries Phosphoserine. The segment covering 326 to 336 (PAESSSLSGCG) has biased composition (polar residues). Positions 339–491 (QPRKLPVFKS…ILNKIEAALT (153 aa)) constitute a cDENN FLCN/SMCR8-type domain. A phosphoserine; by ULK1 mark is found at Ser-406, Ser-537, and Ser-542. A dDENN FLCN/SMCR8-type domain is found at 493–558 (QNLSVDVVDQ…LLKFWMTGLS (66 aa)). Position 571 is a phosphoserine (Ser-571).

This sequence belongs to the folliculin family. As to quaternary structure, interacts (via C-terminus) with FNIP1 or FNIP2 (via C-terminus). Component of the lysosomal folliculin complex (LFC), composed of FLCN, FNIP1 (or FNIP2), RagA/RRAGA or RagB/RRAGB GDP-bound, RagC/RRAGC or RagD/RRAGD GTP-bound, and Ragulator. Interaction with FNIP1 or FNIP2 mediates indirect interaction with the PRKAA1, PRKAB1 and PRKAG1 subunits of 5'-AMP-activated protein kinase (AMPK). Interacts with HSP90AA1 in the presence of FNIP1. Interacts with HSP70, STUB1, CDC37, AHSA1, CCT2, STIP1, PTGES3 and PPP5C. Interacts with GABARAP; interaction takes place in the presence of FNIP1 and/or FNIP2. Interacts with RILP; the interaction is direct and promotes association between RILP and RAB34. Interacts with KIF3A and KIF3B. Interacts with lactate dehydrogenase LDHA, but not LDHB; the interaction is direct, may preferentially bind LDHA dimers rather than tetramers, and regulates LDHA activity, acting as an uncompetitive inhibitor. In terms of processing, phosphorylation by ULK1 modulates the interaction with GABARAP and is required to regulate autophagy. In terms of tissue distribution, expressed in most tissues tested, including skin, lung, kidney, heart, testis and stomach.

It is found in the lysosome membrane. The protein resides in the cytoplasm. The protein localises to the cytosol. Its subcellular location is the cell projection. It localises to the cilium. It is found in the cytoskeleton. The protein resides in the microtubule organizing center. The protein localises to the centrosome. Its subcellular location is the spindle. It localises to the nucleus. Its activity is regulated as follows. GTPase-activating activity is inhibited in the folliculin complex (LFC), which stabilizes the GDP-bound state of RagA/RRAGA (or RagB/RRAGB), because Arg-164 is located far from the RagC/RRAGC or RagD/RRAGD nucleotide pocket. Disassembly of the LFC complex upon amino acid restimulation liberates the GTPase-activating activity. Its function is as follows. Multi-functional protein, involved in both the cellular response to amino acid availability and in the regulation of glycolysis. GTPase-activating protein that plays a key role in the cellular response to amino acid availability through regulation of the non-canonical mTORC1 signaling cascade controlling the MiT/TFE factors TFEB and TFE3. Activates mTORC1 by acting as a GTPase-activating protein: specifically stimulates GTP hydrolysis by RagC/RRAGC or RagD/RRAGD, promoting the conversion to the GDP-bound state of RagC/RRAGC or RagD/RRAGD, and thereby activating the kinase activity of mTORC1. The GTPase-activating activity is inhibited during starvation and activated in presence of nutrients. Acts as a key component for non-canonical mTORC1-dependent control of the MiT/TFE factors TFEB and TFE3, while it is not involved in mTORC1-dependent phosphorylation of canonical RPS6KB1/S6K1 and EIF4EBP1/4E-BP1. In low-amino acid conditions, the lysosomal folliculin complex (LFC) is formed on the membrane of lysosomes, which inhibits the GTPase-activating activity of FLCN, inactivates mTORC1 and maximizes nuclear translocation of TFEB and TFE3. Upon amino acid restimulation, RagA/RRAGA (or RagB/RRAGB) nucleotide exchange promotes disassembly of the LFC complex and liberates the GTPase-activating activity of FLCN, leading to activation of mTORC1 and subsequent cytoplasmic retention of TFEB and TFE3. Indirectly acts as a positive regulator of Wnt signaling by promoting mTOR-dependent cytoplasmic retention of MiT/TFE factor TFE3. Required for the exit of hematopoietic stem cell from pluripotency by promoting mTOR-dependent cytoplasmic retention of TFE3, thereby increasing Wnt signaling. Acts as an inhibitor of browning of adipose tissue by regulating mTOR-dependent cytoplasmic retention of TFE3. Involved in the control of embryonic stem cells differentiation; together with LAMTOR1 it is necessary to recruit and activate RagC/RRAGC and RagD/RRAGD at the lysosomes, and to induce exit of embryonic stem cells from pluripotency via non-canonical, mTOR-independent TFE3 inactivation. In response to flow stress, regulates STK11/LKB1 accumulation and mTORC1 activation through primary cilia: may act by recruiting STK11/LKB1 to primary cilia for activation of AMPK resided at basal bodies, causing mTORC1 down-regulation. Together with FNIP1 and/or FNIP2, regulates autophagy: following phosphorylation by ULK1, interacts with GABARAP and promotes autophagy. Required for starvation-induced perinuclear clustering of lysosomes by promoting association of RILP with its effector RAB34. Regulates glycolysis by binding to lactate dehydrogenase LDHA, acting as an uncompetitive inhibitor. The protein is Folliculin of Homo sapiens (Human).